The chain runs to 797 residues: Ribosome biogenesis protein BOP1 homolog (797 aa).

2 disordered regions span residues 22 to 112 (LVPS…GGGP) and 149 to 177 (SICA…RNTV). Residues 61–73 (AGAAAAAVEGTAA) show a composition bias toward low complexity. A compositionally biased stretch (acidic residues) spans 74 to 87 (PEDEAADNSSEEDA). Over residues 90 to 112 (GSHGEGAGEGGGSGTWPGNGGGP) the composition is skewed to gly residues. 7 WD repeats span residues 462-502 (GHMG…CWRT), 504-544 (VLEG…EEAE), 581-623 (RLRF…SQNP), 626-664 (KNRG…LAKK), 667-706 (GGGG…KPYK), 710-749 (YHSA…DLLT), and 766-797 (TASE…LYCN).

Belongs to the WD repeat BOP1/ERB1 family.

The protein resides in the nucleus. It localises to the nucleolus. It is found in the nucleoplasm. In terms of biological role, required for maturation of ribosomal RNAs and formation of the large ribosomal subunit. The sequence is that of Ribosome biogenesis protein BOP1 homolog from Chlamydomonas reinhardtii (Chlamydomonas smithii).